A 308-amino-acid polypeptide reads, in one-letter code: GTPase Era (308 aa).

In terms of domain architecture, Era-type G spans 14–181; sequence RCGFVALIGA…RSTLAEMVPP (168 aa). Positions 22-29 are G1; it reads GAPNVGKS. Residue 22–29 participates in GTP binding; it reads GAPNVGKS. The G2 stretch occupies residues 48 to 52; it reads QTTRA. The G3 stretch occupies residues 69–72; sequence DTPG. GTP contacts are provided by residues 69–73 and 131–134; these read DTPGI and NKVD. Residues 131-134 are G4; the sequence is NKVD. The G5 stretch occupies residues 160-162; it reads IAA. One can recognise a KH type-2 domain in the interval 212-289; it reads LHQELPYQST…HLFLFVKVRE (78 aa).

It belongs to the TRAFAC class TrmE-Era-EngA-EngB-Septin-like GTPase superfamily. Era GTPase family. As to quaternary structure, monomer.

It is found in the cytoplasm. The protein localises to the cell inner membrane. Its function is as follows. An essential GTPase that binds both GDP and GTP, with rapid nucleotide exchange. Plays a role in 16S rRNA processing and 30S ribosomal subunit biogenesis and possibly also in cell cycle regulation and energy metabolism. In Bradyrhizobium diazoefficiens (strain JCM 10833 / BCRC 13528 / IAM 13628 / NBRC 14792 / USDA 110), this protein is GTPase Era.